The sequence spans 227 residues: Ubiquitin domain-containing protein 1 (227 aa).

The interval 1-36 is disordered; that stretch reads MGNCVGRQRRERPTAPGHPRKRAGRNEPLKKERLKW. Positions 24 to 36 are enriched in basic and acidic residues; the sequence is GRNEPLKKERLKW. In terms of domain architecture, Ubiquitin-like spans 149 to 224; it reads FPLKVRLSTG…IQVIINQPPP (76 aa).

Interacts with UBTD1.

Functionally, may be involved in the regulation of cellular senescence through a positive feedback loop with TP53. Is a TP53 downstream target gene that increases the stability of TP53 protein by promoting the ubiquitination and degradation of MDM2. This is Ubiquitin domain-containing protein 1 (UBTD1) from Bos taurus (Bovine).